The sequence spans 198 residues: Heat shock 70 kDa protein (198 aa).

Over residues 170–191 (GGGVPSGMPGGMPGAGGGGGKG) the composition is skewed to gly residues. Residues 170-198 (GGGVPSGMPGGMPGAGGGGGKGPTIEEVD) form a disordered region.

This sequence belongs to the heat shock protein 70 family.

This chain is Heat shock 70 kDa protein, found in Schistosoma japonicum (Blood fluke).